A 372-amino-acid polypeptide reads, in one-letter code: Spermidine/putrescine import ATP-binding protein PotA (372 aa).

The ABC transporter domain maps to 11–241 (IELRSITKSY…PANLFVARFI (231 aa)). 43 to 50 (GPSGCGKT) is an ATP binding site.

Belongs to the ABC transporter superfamily. Spermidine/putrescine importer (TC 3.A.1.11.1) family. The complex is composed of two ATP-binding proteins (PotA), two transmembrane proteins (PotB and PotC) and a solute-binding protein (PotD).

The protein resides in the cell inner membrane. It carries out the reaction ATP + H2O + polyamine-[polyamine-binding protein]Side 1 = ADP + phosphate + polyamineSide 2 + [polyamine-binding protein]Side 1.. Functionally, part of the ABC transporter complex PotABCD involved in spermidine/putrescine import. Responsible for energy coupling to the transport system. This is Spermidine/putrescine import ATP-binding protein PotA from Aggregatibacter actinomycetemcomitans (Actinobacillus actinomycetemcomitans).